A 267-amino-acid polypeptide reads, in one-letter code: MATSARRAYGFGRADEATHPDSIRATLAEFLSTFVFVFAGEGSILALDKLYWDTAAHTGTNTPGGLVLVALAHALALFAAVSAAINVSGGHVNPAVTFAALIGGRISVIRAIYYWVAQLIGAILACLLLRLATNGLRPVGFHVASGVSELHGLLMEIILTFALVYVVYSTAIDPKRGSIGIIAPLAIGLIVGANILVGGPFDGASMNPARAFGPALVGWRWSNHWIYWVGPFIGGALAALIYEYMIIPSVNEPPHHSTHQPLAPEDY.

Met-1 carries the N-acetylmethionine modification. Ala-2 is subject to N-acetylalanine; in Probable aquaporin TIP3-2, N-terminally processed. At Ala-2 to Thr-26 the chain is on the cytoplasmic side. The helical transmembrane segment at Leu-27 to Leu-47 threads the bilayer. At Asp-48 to Leu-66 the chain is on the vacuolar side. The chain crosses the membrane as a helical span at residues Val-67–Val-87. The Cytoplasmic portion of the chain corresponds to Ser-88–Arg-110. The short motif at Asn-93–Ala-95 is the NPA 1 element. Residues Ala-111 to Leu-131 form a helical membrane-spanning segment. Residues Ala-132–His-151 lie on the Vacuolar side of the membrane. A helical transmembrane segment spans residues Gly-152–Ile-172. At Asp-173–Ser-178 the chain is on the cytoplasmic side. Residues Ile-179–Gly-199 traverse the membrane as a helical segment. The Vacuolar portion of the chain corresponds to Pro-200–Ile-226. An NPA 2 motif is present at residues Asn-207 to Ala-209. Residues Tyr-227 to Ile-247 traverse the membrane as a helical segment. Residues Pro-248–Tyr-267 lie on the Cytoplasmic side of the membrane.

This sequence belongs to the MIP/aquaporin (TC 1.A.8) family. TIP (TC 1.A.8.10) subfamily. In terms of tissue distribution, predominantly expressed in developing seeds. Also expressed in rosette leaves.

Its subcellular location is the vacuole membrane. In terms of biological role, aquaporins facilitate the transport of water and small neutral solutes across cell membranes. The sequence is that of Probable aquaporin TIP3-2 (TIP3-2) from Arabidopsis thaliana (Mouse-ear cress).